Reading from the N-terminus, the 1028-residue chain is Pro-apoptotic serine protease nma111 (1028 aa).

Residues 1 to 46 (MDLNGETSTKRKRSSVAAPAERPAKHLKPGNSTLTPGDATPANGTV) form a disordered region. The segment at 82-266 (VVSIHFCQTC…AATDYFLPLD (185 aa)) is serine protease. Active-site charge relay system residues include histidine 120, aspartate 151, and serine 233. 2 PDZ domains span residues 289–374 (QWIL…LLVQ) and 876–957 (VFCG…VTFD). Residues 991–1001 (SHERDRHKDGI) show a composition bias toward basic and acidic residues. Positions 991 to 1028 (SHERDRHKDGITPDAANLNPDAMDEVYEEVSDVEPEVD) are disordered. The span at 1012 to 1028 (AMDEVYEEVSDVEPEVD) shows a compositional bias: acidic residues.

It belongs to the peptidase S1C family.

It is found in the nucleus. Its function is as follows. Nuclear serine protease which mediates apoptosis. In Aspergillus fumigatus (strain ATCC MYA-4609 / CBS 101355 / FGSC A1100 / Af293) (Neosartorya fumigata), this protein is Pro-apoptotic serine protease nma111 (nma111).